The chain runs to 291 residues: Pirin-like protein (291 aa).

The protein belongs to the pirin family.

Its subcellular location is the nucleus. This chain is Pirin-like protein, found in Solanum lycopersicum (Tomato).